A 96-amino-acid chain; its full sequence is Putative membrane protein insertion efficiency factor (96 aa).

Residues 68–96 are disordered; it reads DPVPEHFPARHPRPQGSPPTDHPPTDQPS. A compositionally biased stretch (pro residues) spans 82 to 96; that stretch reads QGSPPTDHPPTDQPS.

This sequence belongs to the UPF0161 family.

The protein localises to the cell membrane. Functionally, could be involved in insertion of integral membrane proteins into the membrane. This chain is Putative membrane protein insertion efficiency factor, found in Deinococcus radiodurans (strain ATCC 13939 / DSM 20539 / JCM 16871 / CCUG 27074 / LMG 4051 / NBRC 15346 / NCIMB 9279 / VKM B-1422 / R1).